A 260-amino-acid chain; its full sequence is Putative sgc region transcriptional regulator (260 aa).

The 57-residue stretch at 5-61 (RPDRIKQMLHYLWQHRHLSTQQAMELFGYAEATVRRDFQYIVNQYPGMIRGHGCLDF) folds into the HTH deoR-type domain. Residues 22-41 (LSTQQAMELFGYAEATVRRD) constitute a DNA-binding region (H-T-H motif).

Functionally, putative transcriptional regulator for the sgcREAQCX region. The chain is Putative sgc region transcriptional regulator (sgcR) from Escherichia coli (strain K12).